The following is a 199-amino-acid chain: Neurotrophic factor BDNF precursor form (199 aa).

The segment at 1–23 is disordered; it reads GQGSLAYPGLRTQGNLETLSGPN. The propeptide occupies 1–100; that stretch reads GQGSLAYPGL…AANMSMRVRR (100 aa). Residues 12 to 23 are compositionally biased toward polar residues; it reads TQGNLETLSGPN. Residue asparagine 93 is glycosylated (N-linked (GlcNAc...) asparagine). Cysteine 113 and cysteine 180 are oxidised to a cystine.

Belongs to the NGF-beta family.

The protein resides in the secreted. Its function is as follows. Promotes the survival of neuronal populations that are all located either in the central nervous system or directly connected to it. This is Neurotrophic factor BDNF precursor form (BDNF) from Morelia spilota (Carpet python).